The primary structure comprises 230 residues: Small ribosomal subunit protein uS3 (230 aa).

A KH type-2 domain is found at V39–R107. A disordered region spans residues S210–N230.

It belongs to the universal ribosomal protein uS3 family. Part of the 30S ribosomal subunit. Forms a tight complex with proteins S10 and S14.

Functionally, binds the lower part of the 30S subunit head. Binds mRNA in the 70S ribosome, positioning it for translation. The protein is Small ribosomal subunit protein uS3 of Neisseria meningitidis serogroup C (strain 053442).